A 265-amino-acid chain; its full sequence is Hemin import ATP-binding protein HmuV (265 aa).

Residues 13 to 249 form the ABC transporter domain; sequence LKASNLHLQL…TAVENVYGWP (237 aa). Residue 45–52 participates in ATP binding; sequence GPNGAGKS.

The protein belongs to the ABC transporter superfamily. Heme (hemin) importer (TC 3.A.1.14.5) family. In terms of assembly, the complex is composed of two ATP-binding proteins (HmuV), two transmembrane proteins (HmuU) and a solute-binding protein (HmuT).

The protein localises to the cell inner membrane. Functionally, part of the ABC transporter complex HmuTUV involved in hemin import. Responsible for energy coupling to the transport system. This Photobacterium damselae subsp. damselae (Listonella damsela) protein is Hemin import ATP-binding protein HmuV.